We begin with the raw amino-acid sequence, 227 residues long: UPF0758 protein Spro_4842 (227 aa).

Positions 105 to 227 constitute an MPN domain; sequence AMLNPRMTQH…CVSFAERGWL (123 aa). Residues His-176, His-178, and Asp-189 each contribute to the Zn(2+) site. The JAMM motif signature appears at 176–189; sequence HNHPSGKAEPSHAD.

It belongs to the UPF0758 family. YicR subfamily.

The protein is UPF0758 protein Spro_4842 of Serratia proteamaculans (strain 568).